Reading from the N-terminus, the 166-residue chain is Fer3-like protein (166 aa).

The segment at 57-88 is disordered; sequence FEEGDPEEEECEVDQGDGEEEEEEERGRGVSL. The span at 60-80 shows a compositional bias: acidic residues; the sequence is GDPEEEECEVDQGDGEEEEEE. The region spanning 101 to 153 is the bHLH domain; sequence AQRQAANIRERKRMFNLNEAFDQLRRKVPTFAYEKRLSRIETLRLAIVYISFM.

Heterodimer with TCF3/E12. Interacts with the bHLH domain of TCF3/E12.

The protein resides in the nucleus. Transcription factor that binds to the E-box and functions as inhibitor of transcription. DNA binding requires dimerization with an E protein. Inhibits transcription activation by ASCL1/MASH1 by sequestering E proteins. In Homo sapiens (Human), this protein is Fer3-like protein (FERD3L).